The sequence spans 250 residues: Probable S-methyl-5'-thioinosine phosphorylase (250 aa).

Residues threonine 14 and 56-57 contribute to the phosphate site; that span reads RH. Methionine 189 lines the substrate pocket. Residue threonine 190 coordinates phosphate. 213-215 is a substrate binding site; that stretch reads NWA.

It belongs to the PNP/MTAP phosphorylase family. MTAP subfamily. Homotrimer.

The enzyme catalyses S-methyl-5'-thioinosine + phosphate = 5-(methylsulfanyl)-alpha-D-ribose 1-phosphate + hypoxanthine. It participates in purine metabolism; purine nucleoside salvage. Functionally, catalyzes the reversible phosphorylation of S-methyl-5'-thioinosine (MTI) to hypoxanthine and 5-methylthioribose-1-phosphate. Involved in the breakdown of S-methyl-5'-thioadenosine (MTA), a major by-product of polyamine biosynthesis. Catabolism of (MTA) occurs via deamination to MTI and phosphorolysis to hypoxanthine. This chain is Probable S-methyl-5'-thioinosine phosphorylase, found in Xanthomonas campestris pv. campestris (strain ATCC 33913 / DSM 3586 / NCPPB 528 / LMG 568 / P 25).